Reading from the N-terminus, the 194-residue chain is Probable proteasome subunit beta type-4 (194 aa).

Belongs to the peptidase T1B family. In terms of assembly, the 26S proteasome consists of a 20S proteasome core and two 19S regulatory subunits. The 20S proteasome core is composed of 28 subunits that are arranged in four stacked rings, resulting in a barrel-shaped structure. The two end rings are each formed by seven alpha subunits, and the two central rings are each formed by seven beta subunits. The catalytic chamber with the active sites is on the inside of the barrel.

The protein localises to the cytoplasm. The protein resides in the nucleus. In terms of biological role, non-catalytic component of the proteasome, a multicatalytic proteinase complex which is characterized by its ability to cleave peptides with Arg, Phe, Tyr, Leu, and Glu adjacent to the leaving group at neutral or slightly basic pH. The proteasome has an ATP-dependent proteolytic activity. The protein is Probable proteasome subunit beta type-4 (PRO2) of Meyerozyma guilliermondii (strain ATCC 6260 / CBS 566 / DSM 6381 / JCM 1539 / NBRC 10279 / NRRL Y-324) (Yeast).